Here is a 124-residue protein sequence, read N- to C-terminus: UPF0102 protein MSMEG_2508/MSMEI_2448 (124 aa).

It belongs to the UPF0102 family.

The chain is UPF0102 protein MSMEG_2508/MSMEI_2448 from Mycolicibacterium smegmatis (strain ATCC 700084 / mc(2)155) (Mycobacterium smegmatis).